The primary structure comprises 244 residues: Protein-L-isoaspartate O-methyltransferase 2 (244 aa).

Ser88 is a catalytic residue.

It belongs to the methyltransferase superfamily. L-isoaspartyl/D-aspartyl protein methyltransferase family.

It is found in the cytoplasm. It carries out the reaction [protein]-L-isoaspartate + S-adenosyl-L-methionine = [protein]-L-isoaspartate alpha-methyl ester + S-adenosyl-L-homocysteine. Catalyzes the methyl esterification of L-isoaspartyl residues in peptides and proteins that result from spontaneous decomposition of normal L-aspartyl and L-asparaginyl residues. It plays a role in the repair and/or degradation of damaged proteins. The polypeptide is Protein-L-isoaspartate O-methyltransferase 2 (Shewanella sediminis (strain HAW-EB3)).